Reading from the N-terminus, the 470-residue chain is tRNA modification GTPase MnmE (470 aa).

Residues lysine 27, glutamate 90, and arginine 129 each contribute to the (6S)-5-formyl-5,6,7,8-tetrahydrofolate site. One can recognise a TrmE-type G domain in the interval 231–391 (GVSLVLAGKP…LRDFLNQRFL (161 aa)). GTP is bound by residues 241–246 (NVGKSS), 260–266 (TPFPGTT), and 285–288 (DTAG). Mg(2+)-binding residues include serine 245 and threonine 266. Lysine 470 is a binding site for (6S)-5-formyl-5,6,7,8-tetrahydrofolate.

Belongs to the TRAFAC class TrmE-Era-EngA-EngB-Septin-like GTPase superfamily. TrmE GTPase family. Homodimer. Heterotetramer of two MnmE and two MnmG subunits. K(+) is required as a cofactor.

The protein localises to the cytoplasm. In terms of biological role, exhibits a very high intrinsic GTPase hydrolysis rate. Involved in the addition of a carboxymethylaminomethyl (cmnm) group at the wobble position (U34) of certain tRNAs, forming tRNA-cmnm(5)s(2)U34. The sequence is that of tRNA modification GTPase MnmE from Syntrophobacter fumaroxidans (strain DSM 10017 / MPOB).